The primary structure comprises 337 residues: Heme A synthase (337 aa).

The next 5 membrane-spanning stretches (helical) occupy residues 6-26, 87-107, 119-139, 154-174, and 192-212; these read ITKWLCISCIMVIATIVIGGI, FIHRLLGRITALIYIVPLIYF, LPYIIALWLFCVQGFMGWYMV, LAFHLIIAVIIYHILFYQLIK, and LIFSGIAITVVYVQIFLGALV. A heme-binding site is contributed by His256. The next 3 helical transmembrane spans lie at 258-278, 285-305, and 308-328; these read LGGYSVFLVVVVLIICLLKIE, IAYFLMIALLMQVSTGIITLL, and VPIIIASIHQLFAVILLSIII. His316 lines the heme pocket.

It belongs to the COX15/CtaA family. Type 2 subfamily. In terms of assembly, interacts with CtaB. Heme b serves as cofactor.

It localises to the cell membrane. It catalyses the reaction Fe(II)-heme o + 2 A + H2O = Fe(II)-heme a + 2 AH2. The protein operates within porphyrin-containing compound metabolism; heme A biosynthesis; heme A from heme O: step 1/1. Its function is as follows. Catalyzes the conversion of heme O to heme A by two successive hydroxylations of the methyl group at C8. The first hydroxylation forms heme I, the second hydroxylation results in an unstable dihydroxymethyl group, which spontaneously dehydrates, resulting in the formyl group of heme A. This Rickettsia massiliae (strain Mtu5) protein is Heme A synthase.